A 306-amino-acid polypeptide reads, in one-letter code: Ribosomal RNA small subunit methyltransferase H (306 aa).

Residues 36–38, D56, F80, D97, and Q104 each bind S-adenosyl-L-methionine; that span reads GGH. The interval 280–306 is disordered; that stretch reads ASEEEVAGNPRSRSAVMRVAERTGEAA.

It belongs to the methyltransferase superfamily. RsmH family.

The protein resides in the cytoplasm. It carries out the reaction cytidine(1402) in 16S rRNA + S-adenosyl-L-methionine = N(4)-methylcytidine(1402) in 16S rRNA + S-adenosyl-L-homocysteine + H(+). Specifically methylates the N4 position of cytidine in position 1402 (C1402) of 16S rRNA. The sequence is that of Ribosomal RNA small subunit methyltransferase H from Polaromonas naphthalenivorans (strain CJ2).